The following is a 410-amino-acid chain: LL-diaminopimelate aminotransferase (410 aa).

Tyr15 and Gly42 together coordinate substrate. Residues Tyr72, 108-109, Tyr132, Asn187, Tyr218, and 246-248 contribute to the pyridoxal 5'-phosphate site; these read AK and SFS. Positions 109, 132, and 187 each coordinate substrate. Lys249 bears the N6-(pyridoxal phosphate)lysine mark. Residues Arg257 and Asn292 each contribute to the pyridoxal 5'-phosphate site. Residues Asn292 and Arg388 each contribute to the substrate site.

This sequence belongs to the class-I pyridoxal-phosphate-dependent aminotransferase family. LL-diaminopimelate aminotransferase subfamily. As to quaternary structure, homodimer. Pyridoxal 5'-phosphate serves as cofactor.

The catalysed reaction is (2S,6S)-2,6-diaminopimelate + 2-oxoglutarate = (S)-2,3,4,5-tetrahydrodipicolinate + L-glutamate + H2O + H(+). It participates in amino-acid biosynthesis; L-lysine biosynthesis via DAP pathway; LL-2,6-diaminopimelate from (S)-tetrahydrodipicolinate (aminotransferase route): step 1/1. Functionally, involved in the synthesis of meso-diaminopimelate (m-DAP or DL-DAP), required for both lysine and peptidoglycan biosynthesis. Catalyzes the direct conversion of tetrahydrodipicolinate to LL-diaminopimelate. Can also use m-DAP instead of LL-DAP as the amino-group donor. The polypeptide is LL-diaminopimelate aminotransferase (Acetivibrio thermocellus (strain ATCC 27405 / DSM 1237 / JCM 9322 / NBRC 103400 / NCIMB 10682 / NRRL B-4536 / VPI 7372) (Clostridium thermocellum)).